The following is a 735-amino-acid chain: uncharacterized protein (735 aa).

Residues 25 to 175 form the GAF domain; the sequence is DLSCLSPDLL…CIAAVLAGLL (151 aa). Residues 185–255 form the PAS domain; that stretch reads SEAARRAMLD…RQGFMRHLAT (71 aa). The PAC domain occupies 263–313; sequence RLVEVEALRADGSVFPAELTVNEHRAGGRRLFSAFVRDISDRITSRRALER. Residues 342 to 464 enclose the GGDEF domain; that stretch reads GAVVLMLRDL…DGHLLHFAEH (123 aa). One can recognise an EAL domain in the interval 472–732; it reads RLELEMALRD…VAGTLPETLA (261 aa).

This is an uncharacterized protein from Azorhizobium caulinodans (strain ATCC 43989 / DSM 5975 / JCM 20966 / LMG 6465 / NBRC 14845 / NCIMB 13405 / ORS 571).